A 201-amino-acid polypeptide reads, in one-letter code: 3-isopropylmalate dehydratase small subunit 1 (201 aa).

It belongs to the LeuD family. LeuD type 1 subfamily. In terms of assembly, heterodimer of LeuC and LeuD.

It carries out the reaction (2R,3S)-3-isopropylmalate = (2S)-2-isopropylmalate. It participates in amino-acid biosynthesis; L-leucine biosynthesis; L-leucine from 3-methyl-2-oxobutanoate: step 2/4. Catalyzes the isomerization between 2-isopropylmalate and 3-isopropylmalate, via the formation of 2-isopropylmaleate. The polypeptide is 3-isopropylmalate dehydratase small subunit 1 (Salmonella typhimurium (strain LT2 / SGSC1412 / ATCC 700720)).